We begin with the raw amino-acid sequence, 271 residues long: MPELPEVEIISNFLFDKIKNKQISGVTVNNWNLRVPITQNIDDVIKGKVINNIKRRGKYIIWHIDNDIVVTVHLGMSGKLIYAKGEQAQNKHDHVIFSFSDNTSIIFNDPRKFGLVIILNKEQEVNFFNDFGIEPFTDEFNGDYLQKLLKSKKVNIKSALMNNKLIVGIGNIYASESLFRARISPLRSAQDLTYKECEKLATEIKNTLSDAIIAGGSTLKDYAQPSGSVGYFQNSFYVYGKVQKPCKICNNTITLIRQNGRSTYFCNACQN.

Pro-2 serves as the catalytic Schiff-base intermediate with DNA. Glu-3 acts as the Proton donor in catalysis. Lys-58 acts as the Proton donor; for beta-elimination activity in catalysis. DNA is bound by residues His-92, Arg-111, and Lys-152. The FPG-type zinc finger occupies 237–271 (YVYGKVQKPCKICNNTITLIRQNGRSTYFCNACQN). Catalysis depends on Arg-261, which acts as the Proton donor; for delta-elimination activity.

Belongs to the FPG family. As to quaternary structure, monomer. Zn(2+) is required as a cofactor.

It catalyses the reaction Hydrolysis of DNA containing ring-opened 7-methylguanine residues, releasing 2,6-diamino-4-hydroxy-5-(N-methyl)formamidopyrimidine.. The catalysed reaction is 2'-deoxyribonucleotide-(2'-deoxyribose 5'-phosphate)-2'-deoxyribonucleotide-DNA = a 3'-end 2'-deoxyribonucleotide-(2,3-dehydro-2,3-deoxyribose 5'-phosphate)-DNA + a 5'-end 5'-phospho-2'-deoxyribonucleoside-DNA + H(+). Functionally, involved in base excision repair of DNA damaged by oxidation or by mutagenic agents. Acts as a DNA glycosylase that recognizes and removes damaged bases. Has a preference for oxidized purines, such as 7,8-dihydro-8-oxoguanine (8-oxoG). Has AP (apurinic/apyrimidinic) lyase activity and introduces nicks in the DNA strand. Cleaves the DNA backbone by beta-delta elimination to generate a single-strand break at the site of the removed base with both 3'- and 5'-phosphates. The polypeptide is Formamidopyrimidine-DNA glycosylase (Wolbachia sp. subsp. Brugia malayi (strain TRS)).